The following is a 154-amino-acid chain: Snaclec salmorin subunit A (154 aa).

The first 23 residues, 1-23, serve as a signal peptide directing secretion; the sequence is MGRFIFVSFGLLVVFLSLSGTGA. 3 disulfide bridges follow: Cys27/Cys38, Cys55/Cys152, and Cys127/Cys144. One can recognise a C-type lectin domain in the interval 34–153; the sequence is NNGHCYQAFN…CGQRNPFVCE (120 aa). 3 residues coordinate Ca(2+): Ser66, Glu68, and Glu72. Residue Glu153 participates in Ca(2+) binding.

This sequence belongs to the snaclec family. As to quaternary structure, heterodimer of subunits A and B; disulfide-linked. In terms of tissue distribution, expressed by the venom gland.

The protein localises to the secreted. Its function is as follows. Inhibits thrombin-induced fibrinogen clotting and factor Xa-induced prothrombin activation. Binds to thrombin and prothrombin exosites. This Gloydius brevicauda (Korean slamosa snake) protein is Snaclec salmorin subunit A.